The chain runs to 476 residues: Probable protein S-acyltransferase 5 (476 aa).

Positions 1 to 11 are enriched in basic and acidic residues; sequence MLDLQPSDRRH. A disordered region spans residues 1-21; the sequence is MLDLQPSDRRHGAPSSSGGVS. Transmembrane regions (helical) follow at residues 53-73 and 85-105; these read SILI…IFVG and GVSV…FLLL. Residues 119 to 138 are disordered; the sequence is YPPEPESNEGNGEPRLAHTP. The DHHC domain occupies 158 to 208; the sequence is KYCDTCMLYRPPRASHCSICNNCVEKFDHHCPWLGQCIGLRNYRFYFMFVL. Cys-188 functions as the S-palmitoyl cysteine intermediate in the catalytic mechanism. A run of 2 helical transmembrane segments spans residues 209-223 and 246-266; these read CSTL…FCWI and SIAL…LTCF. Disordered stretches follow at residues 320–340 and 373–454; these read SKEP…PSLQ and VASR…ASRD. Ser-336 carries the post-translational modification Phosphoserine. The span at 387-412 shows a compositional bias: basic and acidic residues; sequence SEGRGIMHSRESSRGRGIMHSRESSR. Position 418 is a phosphoserine (Ser-418). Positions 425–441 are enriched in basic and acidic residues; it reads VNEDLRTRDESVSRVGE.

Belongs to the DHHC palmitoyltransferase family.

It is found in the cell membrane. The enzyme catalyses L-cysteinyl-[protein] + hexadecanoyl-CoA = S-hexadecanoyl-L-cysteinyl-[protein] + CoA. Its function is as follows. Palmitoyl acyltransferase. In Arabidopsis thaliana (Mouse-ear cress), this protein is Probable protein S-acyltransferase 5 (PAT05).